We begin with the raw amino-acid sequence, 222 residues long: LHFPL tetraspan subfamily member 3 protein (222 aa).

A run of 4 helical transmembrane segments spans residues 22-42 (IGVL…VCFI), 96-116 (FFIG…TLFF), 126-146 (ICAW…MIFP), and 177-197 (ILAI…VVLG).

This sequence belongs to the LHFP family. In terms of tissue distribution, brain-specific.

The protein resides in the membrane. This Mus musculus (Mouse) protein is LHFPL tetraspan subfamily member 3 protein.